Consider the following 217-residue polypeptide: Somatotropin (217 aa).

The signal sequence occupies residues 1–26; that stretch reads MMAAGPRTSLLLAFALLCLPWTQVVG. A Zn(2+)-binding site is contributed by His46. A disulfide bridge connects residues Cys79 and Cys190. Residue Ser132 is modified to Phosphoserine. Glu199 lines the Zn(2+) pocket. Cys207 and Cys215 are disulfide-bonded.

Belongs to the somatotropin/prolactin family.

It localises to the secreted. Its function is as follows. Plays an important role in growth control. Its major role in stimulating body growth is to stimulate the liver and other tissues to secrete IGF1. It stimulates both the differentiation and proliferation of myoblasts. It also stimulates amino acid uptake and protein synthesis in muscle and other tissues. This Bubalus bubalis (Domestic water buffalo) protein is Somatotropin (GH1).